The chain runs to 444 residues: Ribosome biogenesis protein WDR12 homolog (444 aa).

The interval 7-87 is ubiquitin-like (UBL) domain; sequence VLVKFVTKLP…ESTLEVEYVP (81 aa). Residues 91-123 form a disordered region; it reads PPQQKNSTPHDDWVSSVDGSRCAPASSSGGSPS. WD repeat units lie at residues 105–148, 150–191, and 203–242; these read SSVD…VASV, AHAG…EEDA, and GHED…RWAA. The disordered stretch occupies residues 243 to 264; it reads GTAEASKKKRKTGTANGSAAAG. 4 WD repeats span residues 272–310, 312–352, 360–400, and 403–444; these read GHLH…AADT, NGSK…GSDA, AHGG…PLGM, and HHTD…YIVS.

This sequence belongs to the WD repeat WDR12/YTM1 family.

It is found in the nucleus. The protein resides in the nucleolus. Its subcellular location is the nucleoplasm. Functionally, required for maturation of ribosomal RNAs and formation of the large ribosomal subunit. The sequence is that of Ribosome biogenesis protein WDR12 homolog from Chlamydomonas reinhardtii (Chlamydomonas smithii).